Reading from the N-terminus, the 184-residue chain is C-phycoerythrin class 1 subunit beta (184 aa).

(2R,3E)-phycoerythrobilin is bound by residues Cys-50 and Cys-61. Asn-72 is subject to N4-methylasparagine. (2R,3E)-phycoerythrobilin is bound by residues Cys-82 and Cys-165.

The protein belongs to the phycobiliprotein family. Heterodimer of an alpha and a beta chain. Contains three covalently linked bilin chromophores.

The protein localises to the cellular thylakoid membrane. In terms of biological role, light-harvesting photosynthetic bile pigment-protein from the phycobiliprotein complex. The chain is C-phycoerythrin class 1 subunit beta (cpeB) from Synechococcus sp. (strain WH7803).